We begin with the raw amino-acid sequence, 323 residues long: tRNA(Ile)-lysidine synthase (323 aa).

33–38 (SGGPDS) is an ATP binding site.

This sequence belongs to the tRNA(Ile)-lysidine synthase family.

The protein localises to the cytoplasm. The enzyme catalyses cytidine(34) in tRNA(Ile2) + L-lysine + ATP = lysidine(34) in tRNA(Ile2) + AMP + diphosphate + H(+). Functionally, ligates lysine onto the cytidine present at position 34 of the AUA codon-specific tRNA(Ile) that contains the anticodon CAU, in an ATP-dependent manner. Cytidine is converted to lysidine, thus changing the amino acid specificity of the tRNA from methionine to isoleucine. The protein is tRNA(Ile)-lysidine synthase of Mycobacterium bovis (strain ATCC BAA-935 / AF2122/97).